Consider the following 355-residue polypeptide: Peptide chain release factor 1 (355 aa).

Residue Q231 is modified to N5-methylglutamine. Basic and acidic residues predominate over residues 281–291; the sequence is ERLAKESEARK. The tract at residues 281 to 302 is disordered; sequence ERLAKESEARKSQVGSGDRSER.

Belongs to the prokaryotic/mitochondrial release factor family. In terms of processing, methylated by PrmC. Methylation increases the termination efficiency of RF1.

It localises to the cytoplasm. Its function is as follows. Peptide chain release factor 1 directs the termination of translation in response to the peptide chain termination codons UAG and UAA. This Campylobacter jejuni subsp. doylei (strain ATCC BAA-1458 / RM4099 / 269.97) protein is Peptide chain release factor 1.